A 908-amino-acid chain; its full sequence is Hyphal wall protein 2 (908 aa).

Residues methionine 1–alanine 20 form the signal peptide. 3 stretches are compositionally biased toward low complexity: residues proline 110–lysine 187, glutamate 266–histidine 324, and histidine 332–threonine 405. Disordered stretches follow at residues proline 110–threonine 221 and threonine 263–tyrosine 477. A compositionally biased stretch (polar residues) spans proline 406–isoleucine 416. The span at threonine 422–tyrosine 477 shows a compositional bias: low complexity. Residues asparagine 449, asparagine 462, and asparagine 519 are each glycosylated (N-linked (GlcNAc...) asparagine). Over residues glycine 539–proline 608 the composition is skewed to low complexity. The disordered stretch occupies residues glycine 539–serine 700. The segment covering threonine 624–glutamine 638 has biased composition (polar residues). Asparagine 634 is a glycosylation site (N-linked (GlcNAc...) asparagine). 2 stretches are compositionally biased toward low complexity: residues serine 639–valine 655 and serine 662–threonine 677. Asparagine 684 carries N-linked (GlcNAc...) asparagine glycosylation. A compositionally biased stretch (low complexity) spans threonine 685–serine 700. N-linked (GlcNAc...) asparagine glycosylation is present at asparagine 764. The disordered stretch occupies residues valine 821 to lysine 844. The GPI-anchor amidated glycine moiety is linked to residue glycine 887. A propeptide spans threonine 888 to isoleucine 908 (removed in mature form).

The GPI-anchor is attached to the protein in the endoplasmic reticulum and serves to target the protein to the cell surface. There, the glucosamine-inositol phospholipid moiety is cleaved off and the GPI-modified mannoprotein is covalently attached via its lipidless GPI glycan remnant to the 1,6-beta-glucan of the outer cell wall layer.

The protein localises to the secreted. It localises to the cell wall. It is found in the membrane. In terms of biological role, GPI-anchored cell wall protein required for mating efficiency, biofilm formation, adhesion, filamentous growth, and oxidative stress tolerance. Involved in normal disseminated infection in a mouse systemic candidiasis model. The polypeptide is Hyphal wall protein 2 (HWP2) (Candida albicans (strain SC5314 / ATCC MYA-2876) (Yeast)).